The following is a 452-amino-acid chain: 1,4-beta-D-glucan cellobiohydrolase A (452 aa).

Residues 1-17 (MHQRALLFSALLTAVRA) form the signal peptide. Asn62 carries N-linked (GlcNAc...) asparagine glycosylation. Glu227 functions as the Nucleophile in the catalytic mechanism. Glu232 acts as the Proton donor in catalysis. Residues Asn285, Asn335, Asn402, and Asn445 are each glycosylated (N-linked (GlcNAc...) asparagine).

Belongs to the glycosyl hydrolase 7 (cellulase C) family.

The protein localises to the secreted. It catalyses the reaction Hydrolysis of (1-&gt;4)-beta-D-glucosidic linkages in cellulose and cellotetraose, releasing cellobiose from the non-reducing ends of the chains.. Functionally, the biological conversion of cellulose to glucose generally requires three types of hydrolytic enzymes: (1) Endoglucanases which cut internal beta-1,4-glucosidic bonds; (2) Exocellobiohydrolases that cut the disaccharide cellobiose from the non-reducing end of the cellulose polymer chain; (3) Beta-1,4-glucosidases which hydrolyze the cellobiose and other short cello-oligosaccharides to glucose. The chain is 1,4-beta-D-glucan cellobiohydrolase A (cbhA) from Aspergillus niger.